A 559-amino-acid chain; its full sequence is Protein NRT1/ PTR FAMILY 2.8 (559 aa).

11 consecutive transmembrane segments (helical) span residues 57 to 77 (GVFLVNVINIWFGSCNILTLA), 92 to 112 (LLLGSIASFIGMGIFALTAAL), 132 to 152 (KWQLGVLFSGLGLLAIGAGGV), 178 to 198 (FFNWWYFSFTVALVIALTGVV), 206 to 226 (WVIGFVIPTACLALSITTFVI), 321 to 341 (LKCVTAILPVWVTGIACFILT), 374 to 394 (VSMITLAIWISLYECVIIPIV), 404 to 424 (LTLKHRIEIVMGIICMIVAGF), 437 to 457 (GSFVSPVSIVMLLPQFALAGL), 481 to 501 (VAGAIFFLSSSIASYICTLLI), and 529 to 549 (YFFIIAGIQVANLLYFRLFAS).

This sequence belongs to the major facilitator superfamily. Proton-dependent oligopeptide transporter (POT/PTR) (TC 2.A.17) family. As to expression, expressed in flowers.

It localises to the membrane. The chain is Protein NRT1/ PTR FAMILY 2.8 (NPF2.8) from Arabidopsis thaliana (Mouse-ear cress).